The primary structure comprises 201 residues: IMP cyclohydrolase (201 aa).

The protein belongs to the archaeal IMP cyclohydrolase family.

The enzyme catalyses IMP + H2O = 5-formamido-1-(5-phospho-D-ribosyl)imidazole-4-carboxamide. Its pathway is purine metabolism; IMP biosynthesis via de novo pathway; IMP from 5-formamido-1-(5-phospho-D-ribosyl)imidazole-4-carboxamide: step 1/1. Catalyzes the cyclization of 5-formylamidoimidazole-4-carboxamide ribonucleotide to IMP. In Methanococcus maripaludis (strain C5 / ATCC BAA-1333), this protein is IMP cyclohydrolase.